A 1166-amino-acid polypeptide reads, in one-letter code: DNA-directed RNA polymerase subunit beta (1166 aa).

Belongs to the RNA polymerase beta chain family. The RNAP catalytic core consists of 2 alpha, 1 beta, 1 beta' and 1 omega subunit. When a sigma factor is associated with the core the holoenzyme is formed, which can initiate transcription.

The catalysed reaction is RNA(n) + a ribonucleoside 5'-triphosphate = RNA(n+1) + diphosphate. DNA-dependent RNA polymerase catalyzes the transcription of DNA into RNA using the four ribonucleoside triphosphates as substrates. The chain is DNA-directed RNA polymerase subunit beta from Nocardioides sp. (strain ATCC BAA-499 / JS614).